Reading from the N-terminus, the 116-residue chain is Large ribosomal subunit protein bL20c (116 aa).

This sequence belongs to the bacterial ribosomal protein bL20 family.

It localises to the plastid. It is found in the chloroplast. Functionally, binds directly to 23S ribosomal RNA and is necessary for the in vitro assembly process of the 50S ribosomal subunit. It is not involved in the protein synthesizing functions of that subunit. The protein is Large ribosomal subunit protein bL20c of Ipomoea purpurea (Common morning glory).